Reading from the N-terminus, the 488-residue chain is Probable 26S proteasome non-ATPase regulatory subunit 3 (488 aa).

The segment at 1–20 (MTQDVEMKEQAAPPSNSLSS) is disordered. The PCI domain maps to 240-421 (SRYLFYLGKI…GWMVSKETGD (182 aa)). The tract at residues 452–488 (FPPNSHKEKESAEKRRERQQQEQELAKHIAEEDDDDF) is disordered. Over residues 456 to 481 (SHKEKESAEKRRERQQQEQELAKHIA) the composition is skewed to basic and acidic residues.

It belongs to the proteasome subunit S3 family. The 26S proteasome is composed of a core protease, known as the 20S proteasome, capped at one or both ends by the 19S regulatory complex (RC). The RC is composed of at least 18 different subunits in two subcomplexes, the base and the lid, which form the portions proximal and distal to the 20S proteolytic core, respectively.

It is found in the nucleus. Functionally, acts as a regulatory subunit of the 26 proteasome which is involved in the ATP-dependent degradation of ubiquitinated proteins. This chain is Probable 26S proteasome non-ATPase regulatory subunit 3 (21D7), found in Nicotiana tabacum (Common tobacco).